The sequence spans 629 residues: uncharacterized protein (629 aa).

The Proton acceptor role is filled by histidine 562.

This sequence belongs to the GMC oxidoreductase family. The cofactor is FAD.

This is an uncharacterized protein from Mycobacterium tuberculosis (strain CDC 1551 / Oshkosh).